The primary structure comprises 490 residues: Tegument protein VP16 (490 aa).

Residues M12–P35 are disordered. S18, S353, S411, and S452 each carry phosphoserine. Positions S411–G490 are transcriptional activation.

The protein belongs to the herpesviridae tegument protein VP16 protein family. As to quaternary structure, interacts with tegument protein VP22. Interacts with gH (via C-terminus). Interacts with the virion host shutoff protein (vhs). Interacts with VP11/12. Associates with the VP16-induced complex; binding to host HCFC1 activates VP16 for association with the octamer motif-binding host protein POU2F1, to form a multiprotein-DNA complex responsible for activating transcription of the viral immediate early genes. Interacts with host P-TEFb; this interaction recruits P-TEFb to the viral alpha-gene promoters and overcomes transcriptional inhibition by ICP22 and promotes transcription of IE genes.

It localises to the virion tegument. The protein localises to the host nucleus. Functionally, in the early stage of viral replication, acts as a transcriptional activator of immediate-early (IE) gene products (alpha-genes), which is released by invading virions. Recruits P-TEFb to the viral alpha-gene promoters and overcomes transcriptional inhibition by ICP22 to promote transcription of IE genes. VP16-induced complex represents a regulatory switch: when it is on, it promotes IE-gene expression and thus lytic infection, and when it is off, it limits IE-gene transcription favoring latent infection. Acts as a key activator of lytic infection by initiating the lytic program through the assembly of the transcriptional regulatory VP16-induced complex composed of VP16 and two cellular factors, HCFC1 and POU2F1. This complex recognizes the core motif 'TAATGARAT' in alpha-gene promoters. In the late stage of viral replication, VP16, as a tegument, is involved in viral assembly. Its function is as follows. May play a role in the aggregation of tegument proteins around nucleocapsids during virus morphogenesis. The protein is Tegument protein VP16 of Human herpesvirus 1 (strain 17) (HHV-1).